The sequence spans 181 residues: Large ribosomal subunit protein uL5 (181 aa).

Belongs to the universal ribosomal protein uL5 family. As to quaternary structure, part of the 50S ribosomal subunit; part of the 5S rRNA/L5/L18/L25 subcomplex. Contacts the 5S rRNA and the P site tRNA. Forms a bridge to the 30S subunit in the 70S ribosome.

Functionally, this is one of the proteins that bind and probably mediate the attachment of the 5S RNA into the large ribosomal subunit, where it forms part of the central protuberance. In the 70S ribosome it contacts protein S13 of the 30S subunit (bridge B1b), connecting the 2 subunits; this bridge is implicated in subunit movement. Contacts the P site tRNA; the 5S rRNA and some of its associated proteins might help stabilize positioning of ribosome-bound tRNAs. The chain is Large ribosomal subunit protein uL5 from Sulfurovum sp. (strain NBC37-1).